A 194-amino-acid chain; its full sequence is Elongation factor P (194 aa).

This sequence belongs to the elongation factor P family.

The protein localises to the cytoplasm. The protein operates within protein biosynthesis; polypeptide chain elongation. Involved in peptide bond synthesis. Stimulates efficient translation and peptide-bond synthesis on native or reconstituted 70S ribosomes in vitro. Probably functions indirectly by altering the affinity of the ribosome for aminoacyl-tRNA, thus increasing their reactivity as acceptors for peptidyl transferase. This chain is Elongation factor P, found in Hydrogenobaculum sp. (strain Y04AAS1).